Consider the following 195-residue polypeptide: ATP-dependent Clp protease proteolytic subunit (195 aa).

S101 functions as the Nucleophile in the catalytic mechanism. Residue H126 is part of the active site.

The protein belongs to the peptidase S14 family. In terms of assembly, component of the chloroplastic Clp protease core complex.

The protein resides in the plastid. Its subcellular location is the chloroplast stroma. The enzyme catalyses Hydrolysis of proteins to small peptides in the presence of ATP and magnesium. alpha-casein is the usual test substrate. In the absence of ATP, only oligopeptides shorter than five residues are hydrolyzed (such as succinyl-Leu-Tyr-|-NHMec, and Leu-Tyr-Leu-|-Tyr-Trp, in which cleavage of the -Tyr-|-Leu- and -Tyr-|-Trp bonds also occurs).. Cleaves peptides in various proteins in a process that requires ATP hydrolysis. Has a chymotrypsin-like activity. Plays a major role in the degradation of misfolded proteins. The chain is ATP-dependent Clp protease proteolytic subunit from Cucumis sativus (Cucumber).